Here is a 594-residue protein sequence, read N- to C-terminus: CTP synthase (594 aa).

The tract at residues 1–272 (MARPKNVKYV…DLRVLKKLGL (272 aa)) is amidoligase domain. Serine 18 is a CTP binding site. Serine 18 contributes to the UTP binding site. Position 19–24 (19–24 (SLGKGI)) interacts with ATP. Residue tyrosine 59 participates in L-glutamine binding. Aspartate 76 lines the ATP pocket. Mg(2+)-binding residues include aspartate 76 and glutamate 146. CTP-binding positions include 153–155 (DIE), 193–198 (KTKPTQ), and lysine 229. Residues 193–198 (KTKPTQ) and lysine 229 each bind UTP. Positions 299–543 (TIVVCGKYTE…VGAAKSYAAV (245 aa)) constitute a Glutamine amidotransferase type-1 domain. Glycine 363 contacts L-glutamine. Cysteine 390 serves as the catalytic Nucleophile; for glutamine hydrolysis. Residues 391 to 394 (LGMQ), glutamate 414, and arginine 471 contribute to the L-glutamine site. Catalysis depends on residues histidine 516 and glutamate 518. The span at 562-571 (AEAYAAYSEE) shows a compositional bias: low complexity. The tract at residues 562-594 (AEAYAAYSEESSAESKSFFPDNGGHDEERDSGQ) is disordered. Over residues 584–594 (GGHDEERDSGQ) the composition is skewed to basic and acidic residues.

The protein belongs to the CTP synthase family. As to quaternary structure, homotetramer.

The enzyme catalyses UTP + L-glutamine + ATP + H2O = CTP + L-glutamate + ADP + phosphate + 2 H(+). The catalysed reaction is L-glutamine + H2O = L-glutamate + NH4(+). It catalyses the reaction UTP + NH4(+) + ATP = CTP + ADP + phosphate + 2 H(+). The protein operates within pyrimidine metabolism; CTP biosynthesis via de novo pathway; CTP from UDP: step 2/2. Allosterically activated by GTP, when glutamine is the substrate; GTP has no effect on the reaction when ammonia is the substrate. The allosteric effector GTP functions by stabilizing the protein conformation that binds the tetrahedral intermediate(s) formed during glutamine hydrolysis. Inhibited by the product CTP, via allosteric rather than competitive inhibition. In terms of biological role, catalyzes the ATP-dependent amination of UTP to CTP with either L-glutamine or ammonia as the source of nitrogen. Regulates intracellular CTP levels through interactions with the four ribonucleotide triphosphates. This is CTP synthase from Chlorobium phaeovibrioides (strain DSM 265 / 1930) (Prosthecochloris vibrioformis (strain DSM 265)).